Consider the following 380-residue polypeptide: 4-hydroxy-3-methylbut-2-en-1-yl diphosphate synthase (flavodoxin) (380 aa).

4 residues coordinate [4Fe-4S] cluster: cysteine 280, cysteine 283, cysteine 315, and glutamate 322.

The protein belongs to the IspG family. The cofactor is [4Fe-4S] cluster.

The enzyme catalyses (2E)-4-hydroxy-3-methylbut-2-enyl diphosphate + oxidized [flavodoxin] + H2O + 2 H(+) = 2-C-methyl-D-erythritol 2,4-cyclic diphosphate + reduced [flavodoxin]. The protein operates within isoprenoid biosynthesis; isopentenyl diphosphate biosynthesis via DXP pathway; isopentenyl diphosphate from 1-deoxy-D-xylulose 5-phosphate: step 5/6. Converts 2C-methyl-D-erythritol 2,4-cyclodiphosphate (ME-2,4cPP) into 1-hydroxy-2-methyl-2-(E)-butenyl 4-diphosphate. This is 4-hydroxy-3-methylbut-2-en-1-yl diphosphate synthase (flavodoxin) from Cutibacterium acnes (strain DSM 16379 / KPA171202) (Propionibacterium acnes).